Reading from the N-terminus, the 338-residue chain is Ferrochelatase (338 aa).

Residues histidine 189 and glutamate 294 each coordinate Fe cation.

The protein belongs to the ferrochelatase family.

Its subcellular location is the cytoplasm. It carries out the reaction heme b + 2 H(+) = protoporphyrin IX + Fe(2+). The protein operates within porphyrin-containing compound metabolism; protoheme biosynthesis; protoheme from protoporphyrin-IX: step 1/1. In terms of biological role, catalyzes the ferrous insertion into protoporphyrin IX. This is Ferrochelatase from Pseudomonas putida (strain ATCC 47054 / DSM 6125 / CFBP 8728 / NCIMB 11950 / KT2440).